The sequence spans 396 residues: Phosphoglycerate kinase (396 aa).

Substrate-binding positions include 19–21, arginine 35, 58–61, arginine 117, and arginine 150; these read DFN and HLGR. ATP-binding positions include lysine 201, glutamate 323, and 349 to 352; that span reads GGDT.

The protein belongs to the phosphoglycerate kinase family. Monomer.

Its subcellular location is the cytoplasm. The catalysed reaction is (2R)-3-phosphoglycerate + ATP = (2R)-3-phospho-glyceroyl phosphate + ADP. It functions in the pathway carbohydrate degradation; glycolysis; pyruvate from D-glyceraldehyde 3-phosphate: step 2/5. The sequence is that of Phosphoglycerate kinase from Desulfosudis oleivorans (strain DSM 6200 / JCM 39069 / Hxd3) (Desulfococcus oleovorans).